We begin with the raw amino-acid sequence, 158 residues long: Phosphopantetheine adenylyltransferase (158 aa).

Position 9 (threonine 9) interacts with substrate. Residues 9-10 (TF) and histidine 17 each bind ATP. Positions 41, 73, and 87 each coordinate substrate. Residues 88–90 (GVR), glutamate 98, and 123–129 (WSYVSST) contribute to the ATP site.

Belongs to the bacterial CoaD family. Homohexamer. Requires Mg(2+) as cofactor.

Its subcellular location is the cytoplasm. The catalysed reaction is (R)-4'-phosphopantetheine + ATP + H(+) = 3'-dephospho-CoA + diphosphate. It functions in the pathway cofactor biosynthesis; coenzyme A biosynthesis; CoA from (R)-pantothenate: step 4/5. In terms of biological role, reversibly transfers an adenylyl group from ATP to 4'-phosphopantetheine, yielding dephospho-CoA (dPCoA) and pyrophosphate. This chain is Phosphopantetheine adenylyltransferase, found in Pasteurella multocida (strain Pm70).